The sequence spans 536 residues: Heat shock factor protein 2 (536 aa).

Glycyl lysine isopeptide (Lys-Gly) (interchain with G-Cter in SUMO2) cross-links involve residues Lys-2 and Lys-82. Residues 7 to 112 (VPAFLSKLWT…LLENIKRKVS (106 aa)) mediate DNA binding. The Nuclear localization signal signature appears at 108-122 (KRKVSSSKPEENKIR). A hydrophobic repeat HR-A/B region spans residues 119-192 (NKIRQEDLTK…VTLVQNNQLV (74 aa)). Residues Lys-135, Lys-139, Lys-151, Lys-210, Lys-218, and Lys-237 each participate in a glycyl lysine isopeptide (Lys-Gly) (interchain with G-Cter in SUMO2) cross-link. The Nuclear localization signal signature appears at 195-210 (KRKRPLLLNTNGAQKK). The disordered stretch occupies residues 300–337 (QSGEQNEPARESLSSGSDGSSPLMSSAVQLNGSSSLTS). Over residues 311-325 (SLSSGSDGSSPLMSS) the composition is skewed to low complexity. The span at 326–337 (AVQLNGSSSLTS) shows a compositional bias: polar residues. The interval 360–385 (LLDYLDSIDCSLEDFQAMLSGRQFSI) is hydrophobic repeat HR-C. A disordered region spans residues 407–438 (NNTKSENKGLETTKNNVVQPVSEEGRKSKSKP). Residues 429–438 (EEGRKSKSKP) show a composition bias toward basic and acidic residues.

Belongs to the HSF family. DNA-binding homotrimer in stressed or heat shocked cells, otherwise found as a homodimer.

The protein resides in the cytoplasm. The protein localises to the nucleus. Its function is as follows. DNA-binding protein that specifically binds heat shock promoter elements (HSE) and activates transcription. In higher eukaryotes, HSF is unable to bind to the HSE unless the cells are heat shocked. This chain is Heat shock factor protein 2 (HSF2), found in Homo sapiens (Human).